The primary structure comprises 127 residues: Membrane-bound lysozyme inhibitor of C-type lysozyme (127 aa).

An N-terminal signal peptide occupies residues 1-18 (MKKALWLLLAAVPVVLVA). Residue C19 is the site of N-palmitoyl cysteine attachment. A lipid anchor (S-diacylglycerol cysteine) is attached at C19. C51 and C124 are oxidised to a cystine.

It belongs to the MliC family. Type 2 subfamily. As to quaternary structure, homodimer.

It localises to the cell outer membrane. Functionally, specifically inhibits C-type lysozymes. This is Membrane-bound lysozyme inhibitor of C-type lysozyme from Pseudomonas aeruginosa (strain ATCC 15692 / DSM 22644 / CIP 104116 / JCM 14847 / LMG 12228 / 1C / PRS 101 / PAO1).